Here is a 423-residue protein sequence, read N- to C-terminus: Elongation factor 1-alpha (423 aa).

The tr-type G domain maps to 5-211 (KEHINLAFIG…DNLEPPEKPT (207 aa)). The interval 14–21 (GHVDHGKS) is G1. Residue 14–21 (GHVDHGKS) coordinates GTP. Position 21 (Ser-21) interacts with Mg(2+). The tract at residues 60–64 (GVTID) is G2. Positions 81–84 (DCPG) are G3. Residues 81–85 (DCPGH) and 136–139 (NKMD) contribute to the GTP site. The G4 stretch occupies residues 136-139 (NKMD). The segment at 175-177 (SAF) is G5.

Belongs to the TRAFAC class translation factor GTPase superfamily. Classic translation factor GTPase family. EF-Tu/EF-1A subfamily.

Its subcellular location is the cytoplasm. The catalysed reaction is GTP + H2O = GDP + phosphate + H(+). GTP hydrolase that promotes the GTP-dependent binding of aminoacyl-tRNA to the A-site of ribosomes during protein biosynthesis. In Methanopyrus kandleri (strain AV19 / DSM 6324 / JCM 9639 / NBRC 100938), this protein is Elongation factor 1-alpha.